The following is a 322-amino-acid chain: (12E)-labda-8(17),12,14-triene synthase (322 aa).

Positions 1–11 (MNDATRTSTTP) are enriched in polar residues. The tract at residues 1–26 (MNDATRTSTTPPALPMPDLRDSFPGP) is disordered. 2 residues coordinate Mg(2+): aspartate 93 and glutamate 98. Positions 93 to 98 (DDAHGE) match the DDXXXE motif motif. Arginine 188 is a substrate binding site. Residues asparagine 234 and serine 238 each coordinate Mg(2+). The short motif at 234–242 (NDLASYAKE) is the NXXXSXXXE motif element. Lysine 241 lines the substrate pocket. Glutamate 242 contacts Mg(2+). Position 319–320 (319–320 (RY)) interacts with substrate.

The protein belongs to the terpene synthase family. It depends on Mg(2+) as a cofactor.

The enzyme catalyses (+)-copalyl diphosphate = (12E)-labda-8(17),12,14-triene + diphosphate. In terms of biological role, involved in the biosynthesis of the labdane-type bicyclic diterpene labda-8(17),12(E),14-triene. Catalyzes the conversion of (+)-copalyl diphosphate to yield labda-8(17),12(E),14-triene. The sequence is that of (12E)-labda-8(17),12,14-triene synthase from Streptomyces anulatus (Streptomyces chrysomallus).